The primary structure comprises 310 residues: Thiamine-monophosphate kinase (310 aa).

Mg(2+)-binding residues include D26, T40, S41, and D42. Residue D49 participates in substrate binding. Mg(2+) is bound by residues D70 and D118. Residues 117–118 (GD) and R141 each bind ATP. D202 is a Mg(2+) binding site. S204 is an ATP binding site. D205 provides a ligand contact to Mg(2+). E251 and W299 together coordinate substrate.

The protein belongs to the thiamine-monophosphate kinase family.

It catalyses the reaction thiamine phosphate + ATP = thiamine diphosphate + ADP. It participates in cofactor biosynthesis; thiamine diphosphate biosynthesis; thiamine diphosphate from thiamine phosphate: step 1/1. Its function is as follows. Catalyzes the ATP-dependent phosphorylation of thiamine-monophosphate (TMP) to form thiamine-pyrophosphate (TPP), the active form of vitamin B1. In Pyrococcus abyssi (strain GE5 / Orsay), this protein is Thiamine-monophosphate kinase.